Consider the following 180-residue polypeptide: Trafficking protein particle complex subunit 3 (180 aa).

Cys68 is lipidated: S-palmitoyl cysteine.

Belongs to the TRAPP small subunits family. BET3 subfamily. In terms of assembly, homodimer. Component of the multisubunit transport protein particle (TRAPP) complex, which includes at least TRAPPC2, TRAPPC2L, TRAPPC3, TRAPPC3L, TRAPPC4, TRAPPC5, TRAPPC8, TRAPPC9, TRAPPC10, TRAPPC11 and TRAPPC12. Heterodimer with TRAPPC6A. The heterodimer TRAPPC3-TRAPPC6A interacts with TRAPPC2L. Heterodimer with TRAPPC6b. The heterodimer TRAPPC6B-TRAPPC3 interacts with TRAPPC1 likely providing a core for TRAPP complex formation.

It localises to the golgi apparatus. Its subcellular location is the cis-Golgi network. It is found in the endoplasmic reticulum. May play a role in vesicular transport from endoplasmic reticulum to Golgi. The sequence is that of Trafficking protein particle complex subunit 3 from Homo sapiens (Human).